The chain runs to 377 residues: Nuclear pore complex protein NUP54 (377 aa).

Residues 1 to 18 show a composition bias toward low complexity; it reads MFGTPSSSPSFGTPSSTP. The tract at residues 1–104 is disordered; sequence MFGTPSSSPS…NTAQQQQQTP (104 aa). A run of 7 repeats spans residues 2-3, 11-12, 20-21, 27-28, 36-37, 49-50, and 87-88. Positions 2–88 are 7 X 2 AA repeats of F-G; that stretch reads FGTPSSSPSF…FQQQPSSNFG (87 aa). A compositionally biased stretch (polar residues) spans 19 to 32; it reads AFGTSSPAFGTPSA. Residues 39-104 are compositionally biased toward low complexity; sequence PSNPSFSSGG…NTAQQQQQTP (66 aa).

This sequence belongs to the NUP54 family. In terms of assembly, part of the nuclear pore complex (NPC). The NPC has an eight-fold symmetrical structure comprising a central transport channel and two rings, the cytoplasmic and nuclear rings, to which eight filaments are attached. The cytoplasmic filaments have loose ends, while the nuclear filaments are joined in a distal ring, forming a nuclear basket. NPCs are highly dynamic in configuration and composition, and can be devided in 3 subcomplexes, the NUP62 subcomplex, the NUP107-160 subcomplex and the NUP93 subcomplex, containing approximately 30 different nucleoporin proteins.

The protein localises to the nucleus envelope. It is found in the nucleus. It localises to the nuclear pore complex. In Arabidopsis thaliana (Mouse-ear cress), this protein is Nuclear pore complex protein NUP54.